We begin with the raw amino-acid sequence, 518 residues long: Homoserine O-acetyltransferase (518 aa).

Positions 69–468 (NVMVICHALT…DSPEGHDAFL (400 aa)) constitute an AB hydrolase-1 domain. The active site involves S182. The active-site Nucleophile is S182. The interval 267 to 365 (RFGRNIPDPS…PNSVSDPFRP (99 aa)) is disordered. Residues 290 to 303 (PAEEHYDIHNEGFR) show a composition bias toward basic and acidic residues. Low complexity predominate over residues 310-341 (RSSTTTSDAPPSPTRTSSTSSTDAITPASTTP). Residues D435 and H464 contribute to the active site.

It belongs to the AB hydrolase superfamily. MetX family.

The catalysed reaction is L-homoserine + acetyl-CoA = O-acetyl-L-homoserine + CoA. It participates in amino-acid biosynthesis; L-methionine biosynthesis via de novo pathway; O-acetyl-L-homoserine from L-homoserine: step 1/1. Its function is as follows. Commits homoserine to the methionine biosynthesis pathway by catalyzing its O-acetylation. The sequence is that of Homoserine O-acetyltransferase (MET2) from Ascobolus immersus.